The primary structure comprises 354 residues: Uroporphyrinogen decarboxylase (354 aa).

Substrate-binding positions include 27–31 (RQAGR), aspartate 77, tyrosine 154, serine 209, and histidine 327.

The protein belongs to the uroporphyrinogen decarboxylase family. In terms of assembly, homodimer.

It localises to the cytoplasm. It catalyses the reaction uroporphyrinogen III + 4 H(+) = coproporphyrinogen III + 4 CO2. The protein operates within porphyrin-containing compound metabolism; protoporphyrin-IX biosynthesis; coproporphyrinogen-III from 5-aminolevulinate: step 4/4. Its function is as follows. Catalyzes the decarboxylation of four acetate groups of uroporphyrinogen-III to yield coproporphyrinogen-III. This chain is Uroporphyrinogen decarboxylase, found in Shewanella sp. (strain ANA-3).